Reading from the N-terminus, the 494-residue chain is Cytochrome P450 2A13 (494 aa).

Asparagine 297 is a substrate binding site. Cysteine 439 provides a ligand contact to heme.

This sequence belongs to the cytochrome P450 family. The cofactor is heme. In terms of tissue distribution, expressed in liver and a number of extrahepatic tissues, including nasal mucosa, lung, trachea, brain, mammary gland, prostate, testis, and uterus, but not in heart, kidney, bone marrow, colon, small intestine, spleen, stomach, thymus, or skeletal muscle.

It localises to the endoplasmic reticulum membrane. The protein resides in the microsome membrane. The enzyme catalyses an organic molecule + reduced [NADPH--hemoprotein reductase] + O2 = an alcohol + oxidized [NADPH--hemoprotein reductase] + H2O + H(+). Exhibits a coumarin 7-hydroxylase activity. Active in the metabolic activation of hexamethylphosphoramide, N,N-dimethylaniline, 2'-methoxyacetophenone, N-nitrosomethylphenylamine, and the tobacco-specific carcinogen, 4-(methylnitrosamino)-1-(3-pyridyl)-1-butanone. Possesses phenacetin O-deethylation activity. The chain is Cytochrome P450 2A13 (CYP2A13) from Homo sapiens (Human).